A 62-amino-acid chain; its full sequence is Small ribosomal subunit protein eS27 (62 aa).

Zn(2+)-binding residues include Cys-17, Cys-20, Cys-36, and Cys-39. The C4-type zinc finger occupies Cys-17–Cys-39.

The protein belongs to the eukaryotic ribosomal protein eS27 family. In terms of assembly, part of the 30S ribosomal subunit. Requires Zn(2+) as cofactor.

This is Small ribosomal subunit protein eS27 from Methanosarcina barkeri (strain Fusaro / DSM 804).